A 1305-amino-acid polypeptide reads, in one-letter code: Rho GTPase-activating protein 33 (1305 aa).

The segment at 1 to 64 (MLQAQKQSDP…KPGKRLSAPR (64 aa)) is disordered. Residue S32 is modified to Phosphoserine. Residues 83 to 192 (FGHIQLLLSP…CGPVLTWMEL (110 aa)) enclose the PX; atypical domain. The 63-residue stretch at 210-272 (PAVAAAHVVK…PSECVELFTE (63 aa)) folds into the SH3 domain. Positions 339-534 (CDLGEHLSNS…FLLTHVEVLF (196 aa)) constitute a Rho-GAP domain. Disordered regions lie at residues 575-818 (RTQG…LDIS), 864-1054 (LSDT…SFFS), and 1115-1305 (SYSG…RSYC). Over residues 582-595 (TPTEPTTPKTPASP) the composition is skewed to low complexity. S594 bears the Phosphoserine mark. Over residues 596-608 (VERRKRERAEKQR) the composition is skewed to basic and acidic residues. The span at 646-669 (SGSRPDTVTLRSAKSEESLSSQAS) shows a compositional bias: polar residues. At S660 the chain carries Phosphoserine. Residues 694 to 733 (APAGSCESLSSSSSSSSSSSSSSSSESSAGGLGPLSGSPS) are compositionally biased toward low complexity. Position 749 is a phosphoserine (S749). A compositionally biased stretch (pro residues) spans 774–786 (PGDPAPPASPAPP). Over residues 787–798 (ASASAFPPRATP) the composition is skewed to low complexity. The span at 864 to 873 (LSDTCQQEIS) shows a compositional bias: polar residues. Residues 895 to 915 (LLPPPLPLLRPGGAPPPPPKN) show a composition bias toward pro residues. Residues 916–940 (PARLMALALAERAQQVAEQQSQQEQ) show a composition bias toward low complexity. Composition is skewed to polar residues over residues 992–1020 (RQQS…SQVS), 1039–1054 (SPCS…SFFS), and 1115–1125 (SYSGPSRSWSP). The residue at position 1188 (Y1188) is a Phosphotyrosine. The segment covering 1194–1208 (GPRGPSPASSSSSSP) has biased composition (low complexity). At R1263 the chain carries Omega-N-methylarginine. Over residues 1292–1305 (SWSLHSEGQTRSYC) the composition is skewed to polar residues.

This sequence belongs to the PX domain-containing GAP family. As to quaternary structure, specifically interacts with CDC42 and RHOQ/TC10 through its Rho-GAP domain. Interacts with NEK6. As to expression, highly expressed in brain and testis. Also expressed in white adipose tissue (WAT) and muscle at a low level.

It localises to the cell membrane. May be involved in several stages of intracellular trafficking. Could play an important role in the regulation of glucose transport by insulin. May act as a downstream effector of RHOQ/TC10 in the regulation of insulin-stimulated glucose transport. In Mus musculus (Mouse), this protein is Rho GTPase-activating protein 33 (Arhgap33).